The chain runs to 895 residues: Pentatricopeptide repeat-containing protein At1g74600, chloroplastic (895 aa).

Residues 1–71 (MNCLANESLN…CNLRTTKILQ (71 aa)) constitute a chloroplast transit peptide. PPR repeat units lie at residues 83–113 (DVFLTKSLLSWYSNSGSMADAAKLFDTIPQP), 114–148 (DVVSCNIMISGYKQHRLFEESLRFFSKMHFLGFEA), 149–183 (NEISYGSVISACSALQAPLFSELVCCHTIKMGYFF), 184–214 (YEVVESALIDVFSKNLRFEDAYKVFRDSLSA), 215–249 (NVYCWNTIIAGALRNQNYGAVFDLFHEMCVGFQKP), 250–280 (DSYTYSSVLAACASLEKLRFGKVVQARVIKC), 284–314 (DVFVCTAIVDLYAKCGHMAEAMEVFSRIPNP), 315–349 (SVVSWTVMLSGYTKSNDAFSALEIFKEMRHSGVEI), 350–384 (NNCTVTSVISACGRPSMVCEASQVHAWVFKSGFYL), 385–415 (DSSVAAALISMYSKSGDIDLSEQVFEDLDDI), 417–451 (RQNIVNVMITSFSQSKKPGKAIRLFTRMLQEGLRT), 452–483 (DEFSVCSLLSVLDCLNLGKQVHGYTLKSGLVL), 484–514 (DLTVGSSLFTLYSKCGSLEESYKLFQGIPFK), 515–549 (DNACWASMISGFNEYGYLREAIGLFSEMLDDGTSP), 550–584 (DESTLAAVLTVCSSHPSLPRGKEIHGYTLRAGIDK), 585–615 (GMDLGSALVNMYSKCGSLKLARQVYDRLPEL), 616–650 (DPVSCSSLISGYSQHGLIQDGFLLFRDMVMSGFTM), 651–685 (DSFAISSILKAAALSDESSLGAQVHAYITKIGLCT), 686–716 (EPSVGSSLLTMYSKFGSIDDCCKAFSQINGP), 717–751 (DLIAWTALIASYAQHGKANEALQVYNLMKEKGFKP), 752–787 (DKVTFVGVLSACSHGGLVEESYFHLNSMVKDYGIEP), and 788–818 (ENRHYVCMVDALGRSGRLREAESFINNMHIK). Residues 824–895 (WGTLLAACKI…VQKEPGWSSV (72 aa)) are type E motif; degenerate.

It belongs to the PPR family. PCMP-E subfamily.

It localises to the plastid. The protein resides in the chloroplast. The chain is Pentatricopeptide repeat-containing protein At1g74600, chloroplastic (PCMP-E69) from Arabidopsis thaliana (Mouse-ear cress).